The sequence spans 233 residues: LexA repressor (233 aa).

Positions 26–46 (FDEMKDALDLRSKSGIHRLIT) form a DNA-binding region, H-T-H motif. Active-site for autocatalytic cleavage activity residues include Ser154 and Lys192.

This sequence belongs to the peptidase S24 family. As to quaternary structure, homodimer.

The catalysed reaction is Hydrolysis of Ala-|-Gly bond in repressor LexA.. Functionally, represses a number of genes involved in the response to DNA damage (SOS response), including recA and lexA. In the presence of single-stranded DNA, RecA interacts with LexA causing an autocatalytic cleavage which disrupts the DNA-binding part of LexA, leading to derepression of the SOS regulon and eventually DNA repair. The chain is LexA repressor from Nitrobacter winogradskyi (strain ATCC 25391 / DSM 10237 / CIP 104748 / NCIMB 11846 / Nb-255).